The chain runs to 275 residues: Large ribosomal subunit protein uL2cz/uL2cy (275 aa).

2 disordered regions span residues 1–26 (MAIHLYKTSTPSTRNGTVDSRQVKSN) and 224–275 (MNPV…RRTK). Residues 7–26 (KTSTPSTRNGTVDSRQVKSN) are compositionally biased toward polar residues.

It belongs to the universal ribosomal protein uL2 family. Part of the 50S ribosomal subunit.

It is found in the plastid. It localises to the chloroplast. This is Large ribosomal subunit protein uL2cz/uL2cy (rpl2-A) from Phaseolus angularis (Azuki bean).